The chain runs to 921 residues: Isoleucine--tRNA ligase (921 aa).

A 'HIGH' region motif is present at residues Pro-57 to His-67. Glu-553 provides a ligand contact to L-isoleucyl-5'-AMP. The short motif at Lys-594–Ser-598 is the 'KMSKS' region element. Lys-597 lines the ATP pocket.

This sequence belongs to the class-I aminoacyl-tRNA synthetase family. IleS type 1 subfamily. As to quaternary structure, monomer.

It is found in the cytoplasm. It catalyses the reaction tRNA(Ile) + L-isoleucine + ATP = L-isoleucyl-tRNA(Ile) + AMP + diphosphate. Its function is as follows. Catalyzes the attachment of isoleucine to tRNA(Ile). As IleRS can inadvertently accommodate and process structurally similar amino acids such as valine, to avoid such errors it has two additional distinct tRNA(Ile)-dependent editing activities. One activity is designated as 'pretransfer' editing and involves the hydrolysis of activated Val-AMP. The other activity is designated 'posttransfer' editing and involves deacylation of mischarged Val-tRNA(Ile). The chain is Isoleucine--tRNA ligase from Bacillus subtilis (strain 168).